A 332-amino-acid polypeptide reads, in one-letter code: CMRF35-like molecule 9 (332 aa).

A signal peptide spans 1 to 18 (MRLLVLLWGCLLLPGYEA). The Ig-like V-type domain maps to 19-121 (LEGPEEISGF…RGPDESLLIS (103 aa)). Residues 19–247 (LEGPEEISGF…KPRVSIPMVR (229 aa)) lie on the Extracellular side of the membrane. A disulfide bridge connects residues cysteine 37 and cysteine 107. Asparagine 96 carries N-linked (GlcNAc...) asparagine glycosylation. 10 O-linked (GalNAc...) threonine glycosylation sites follow: threonine 137, threonine 143, threonine 144, threonine 155, threonine 161, threonine 170, threonine 171, threonine 177, threonine 187, and threonine 195. The disordered stretch occupies residues 146 to 239 (LQPKAKAQQT…PALSSGSSKP (94 aa)). A compositionally biased stretch (low complexity) spans 147–158 (QPKAKAQQTQPP). Positions 168–181 (AATTAKQGKTGAEA) are enriched in low complexity. Polar residues predominate over residues 186-205 (GTSQYGHERTSQYTGTSPHP). The O-linked (GalNAc...) serine glycan is linked to serine 196. 2 O-linked (GalNAc...) threonine glycosylation sites follow: threonine 199 and threonine 201. Serine 202 carries O-linked (GalNAc...) serine glycosylation. An O-linked (GalNAc...) threonine glycan is attached at threonine 207. O-linked (GalNAc...) serine glycans are attached at residues serine 208, serine 213, serine 214, and serine 222. Polar residues predominate over residues 220 to 239 (LDSTSAEDTSPALSSGSSKP). Threonine 223 is a glycosylation site (O-linked (GalNAc...) threonine). A glycan (O-linked (GalNAc...) serine) is linked at serine 224. O-linked (GalNAc...) threonine glycosylation is present at threonine 228. O-linked (GalNAc...) serine glycosylation is found at serine 229 and serine 237. Residues 248 to 268 (ILAPVLVLLSLLSAAGLIAFC) traverse the membrane as a helical segment. Over 269–332 (SHLLLWRKEA…ELGFSKFVSA (64 aa)) the chain is Cytoplasmic.

The protein belongs to the CD300 family. Post-translationally, O-glycosylated with sialylated oligosaccharides. As to expression, highly expressed in heart, skeletal muscle and placenta.

The protein resides in the apical cell membrane. It is found in the basolateral cell membrane. Its subcellular location is the endosome. The protein localises to the multivesicular body membrane. In terms of biological role, receptor which may mediate L-selectin-dependent lymphocyte rollings. Binds SELL in a calcium dependent manner. Binds lymphocyte. The protein is CMRF35-like molecule 9 (CD300LG) of Homo sapiens (Human).